The primary structure comprises 165 residues: NADPH-dependent 7-cyano-7-deazaguanine reductase (165 aa).

The active-site Thioimide intermediate is cysteine 56. Residue aspartate 63 is the Proton donor of the active site. Residues 78 to 80 and 97 to 98 contribute to the substrate site; these read VES and HE.

The protein belongs to the GTP cyclohydrolase I family. QueF type 1 subfamily.

The protein resides in the cytoplasm. It carries out the reaction 7-aminomethyl-7-carbaguanine + 2 NADP(+) = 7-cyano-7-deazaguanine + 2 NADPH + 3 H(+). It participates in tRNA modification; tRNA-queuosine biosynthesis. In terms of biological role, catalyzes the NADPH-dependent reduction of 7-cyano-7-deazaguanine (preQ0) to 7-aminomethyl-7-deazaguanine (preQ1). The chain is NADPH-dependent 7-cyano-7-deazaguanine reductase from Bacillus anthracis (strain A0248).